A 543-amino-acid chain; its full sequence is MQLTLWTYEGPPHVGAMRVATALDDVHYVLHAPQGDTYADLLFTMIERLPRRPPVTYTTFQARDLGGDTAELFKTACSQAFERFRPNAMLVGASCTAELIQDDPGGLARALALPIPVVPLELPSYQRKENWGASETFYQVVRTLAGPRAPAPGTPRPAREPGAKPCCNLLGPTALGFRHRDDVREITGLLNELGIEVRTVAPLGASADDIARLGEADFNVVLYPETAQQAAGWLQRFFGQPFTKTIPIGVKATKAFIAEVLQLAGLPADTPLPDALSRSPWYSRSVDSTYLTGKRVFIFGDATHAIAAARVATEEMGFTVVGLGTYSREFARDVRDAAKHYGVEALITDDYLEVEAKVAELHPELVLGTQMERHIAKRLGVPCAVISAPVHVQDFPARYSPQMGFEGANVLFDSWVHPLMMGLEEHLLTMFRGDFEFHDGAAASHLGRAAVPPPAAAPAPAAESSDVPAVAETATAAATVAAPAASAPITVAQWAPDAQKELQKIPFFVRGKARRNTERFAAERGLATITVETLYDAKAHFGR.

Asp36 is a [4Fe-4S] cluster binding site. Asp287 serves as the catalytic Proton donor. A substrate-binding site is contributed by 422–423 (GL).

This sequence belongs to the ChlB/BchB/BchZ family. Protochlorophyllide reductase is composed of three subunits; BchL, BchN and BchB. Forms a heterotetramer of two BchB and two BchN subunits. The cofactor is [4Fe-4S] cluster.

The catalysed reaction is chlorophyllide a + oxidized 2[4Fe-4S]-[ferredoxin] + 2 ADP + 2 phosphate = protochlorophyllide a + reduced 2[4Fe-4S]-[ferredoxin] + 2 ATP + 2 H2O. The protein operates within porphyrin-containing compound metabolism; bacteriochlorophyll biosynthesis (light-independent). Component of the dark-operative protochlorophyllide reductase (DPOR) that uses Mg-ATP and reduced ferredoxin to reduce ring D of protochlorophyllide (Pchlide) to form chlorophyllide a (Chlide). This reaction is light-independent. The NB-protein (BchN-BchB) is the catalytic component of the complex. This is Light-independent protochlorophyllide reductase subunit B from Rubrivivax gelatinosus (strain NBRC 100245 / IL144).